The chain runs to 98 residues: Co-chaperonin GroES (98 aa).

This sequence belongs to the GroES chaperonin family. As to quaternary structure, heptamer of 7 subunits arranged in a ring. Interacts with the chaperonin GroEL.

The protein resides in the cytoplasm. In terms of biological role, together with the chaperonin GroEL, plays an essential role in assisting protein folding. The GroEL-GroES system forms a nano-cage that allows encapsulation of the non-native substrate proteins and provides a physical environment optimized to promote and accelerate protein folding. GroES binds to the apical surface of the GroEL ring, thereby capping the opening of the GroEL channel. This Bartonella tribocorum (strain CIP 105476 / IBS 506) protein is Co-chaperonin GroES.